The following is a 432-amino-acid chain: Adenylosuccinate synthetase (432 aa).

Residues 13-19 (GDEGKGK) and 41-43 (GHT) contribute to the GTP site. Asp14 functions as the Proton acceptor in the catalytic mechanism. Mg(2+) is bound by residues Asp14 and Gly41. Residues 14 to 17 (DEGK), 39 to 42 (NAGH), Thr131, Arg145, Gln226, Thr241, and Arg305 contribute to the IMP site. Residue His42 is the Proton donor of the active site. 301–307 (SVTGRAR) lines the substrate pocket. Residues Arg307, 333–335 (KLD), and 416–418 (STG) each bind GTP.

This sequence belongs to the adenylosuccinate synthetase family. As to quaternary structure, homodimer. It depends on Mg(2+) as a cofactor.

Its subcellular location is the cytoplasm. It catalyses the reaction IMP + L-aspartate + GTP = N(6)-(1,2-dicarboxyethyl)-AMP + GDP + phosphate + 2 H(+). It participates in purine metabolism; AMP biosynthesis via de novo pathway; AMP from IMP: step 1/2. In terms of biological role, plays an important role in the de novo pathway of purine nucleotide biosynthesis. Catalyzes the first committed step in the biosynthesis of AMP from IMP. This chain is Adenylosuccinate synthetase, found in Neisseria meningitidis serogroup B (strain ATCC BAA-335 / MC58).